The sequence spans 328 residues: uncharacterized protein (328 aa).

The N-terminal stretch at 1-32 is a signal peptide; that stretch reads MFNFRLFSRRGKSLGLLAIVLLLFGFYSLKSS.

The protein belongs to the glycosyltransferase 34 family.

Its subcellular location is the endoplasmic reticulum. This is an uncharacterized protein from Schizosaccharomyces pombe (strain 972 / ATCC 24843) (Fission yeast).